The sequence spans 353 residues: MTAILERRETTSLWGRFCNWITSTENRLYIGWFGVLMIPTLLTATSVFIIAFIAAPPVDIDGIREPVSGSLLYGNNIISGAIIPTSAAIGLHFYPIWEAASVDEWLYNGGPYELIVLHFLLGVACYMGREWELSFRLGMRPWIAVAYSAPVAAATAVFLIYPIGQGSFSDGMPLGISGTFNFMIVFQAEHNILMHPFHMLGVAGVFGGSLFSAMHGSLVTSSLIRETTENESANAGYRFGQEEETYNIVAAHGYFGRLIFQYASFNNSRSLHFFLAAWPVVGIWFTALGISTMAFNLNGFNFNQSVVDSQGRVINTWADIINRANLGMEVMHERNAHNFPLDLAAVEAPSING.

Thr2 carries the post-translational modification N-acetylthreonine. Phosphothreonine is present on Thr2. 3 helical membrane-spanning segments follow: residues 29-46 (YIGW…TATS), 118-133 (HFLL…EWEL), and 142-156 (WIAV…AATA). His118 is a binding site for chlorophyll a. A pheophytin a-binding site is contributed by Tyr126. The [CaMn4O5] cluster site is built by Asp170 and Glu189. A helical membrane pass occupies residues 197–218 (FHMLGVAGVFGGSLFSAMHGSL). His198 lines the chlorophyll a pocket. A quinone is bound by residues His215 and 264–265 (SF). His215 lines the Fe cation pocket. His272 contributes to the Fe cation binding site. The helical transmembrane segment at 274-288 (FLAAWPVVGIWFTAL) threads the bilayer. [CaMn4O5] cluster contacts are provided by His332, Glu333, Asp342, and Ala344. Positions 345-353 (AVEAPSING) are excised as a propeptide.

It belongs to the reaction center PufL/M/PsbA/D family. PSII is composed of 1 copy each of membrane proteins PsbA, PsbB, PsbC, PsbD, PsbE, PsbF, PsbH, PsbI, PsbJ, PsbK, PsbL, PsbM, PsbT, PsbX, PsbY, PsbZ, Psb30/Ycf12, at least 3 peripheral proteins of the oxygen-evolving complex and a large number of cofactors. It forms dimeric complexes. The cofactor is The D1/D2 heterodimer binds P680, chlorophylls that are the primary electron donor of PSII, and subsequent electron acceptors. It shares a non-heme iron and each subunit binds pheophytin, quinone, additional chlorophylls, carotenoids and lipids. D1 provides most of the ligands for the Mn4-Ca-O5 cluster of the oxygen-evolving complex (OEC). There is also a Cl(-1) ion associated with D1 and D2, which is required for oxygen evolution. The PSII complex binds additional chlorophylls, carotenoids and specific lipids.. Tyr-161 forms a radical intermediate that is referred to as redox-active TyrZ, YZ or Y-Z. In terms of processing, C-terminally processed by CTPA; processing is essential to allow assembly of the oxygen-evolving complex and thus photosynthetic growth.

It is found in the plastid. It localises to the chloroplast thylakoid membrane. The enzyme catalyses 2 a plastoquinone + 4 hnu + 2 H2O = 2 a plastoquinol + O2. Its function is as follows. Photosystem II (PSII) is a light-driven water:plastoquinone oxidoreductase that uses light energy to abstract electrons from H(2)O, generating O(2) and a proton gradient subsequently used for ATP formation. It consists of a core antenna complex that captures photons, and an electron transfer chain that converts photonic excitation into a charge separation. The D1/D2 (PsbA/PsbD) reaction center heterodimer binds P680, the primary electron donor of PSII as well as several subsequent electron acceptors. In Chloranthus spicatus (Chulantree), this protein is Photosystem II protein D1.